We begin with the raw amino-acid sequence, 37 residues long: MKIRASIRKICEKCRLIRRRRRIMVICSNPRHKQRQG.

Belongs to the bacterial ribosomal protein bL36 family.

It localises to the plastid. Its subcellular location is the chloroplast. The sequence is that of Large ribosomal subunit protein bL36c from Cucumis sativus (Cucumber).